A 180-amino-acid chain; its full sequence is MVKPENNLNQKKTKIGILGGTFDPAHKGHLEISKQAKKILELKNIIWAITKQNPFKNTSKTDLKNRIKFAKKIIGKNNFIKVKFYEEKVLSNKTIDLINYLNKDKKFEIYFIMGADNLINFHKWYKWKSIIKKCNLLVFDRQGYKAKSLKSVTYNGVNKNRLSFINFKKVNISSSQLRKI.

The protein belongs to the NadD family.

The catalysed reaction is nicotinate beta-D-ribonucleotide + ATP + H(+) = deamido-NAD(+) + diphosphate. Its pathway is cofactor biosynthesis; NAD(+) biosynthesis; deamido-NAD(+) from nicotinate D-ribonucleotide: step 1/1. In terms of biological role, catalyzes the reversible adenylation of nicotinate mononucleotide (NaMN) to nicotinic acid adenine dinucleotide (NaAD). This Pelagibacter ubique (strain HTCC1062) protein is Probable nicotinate-nucleotide adenylyltransferase.